The sequence spans 395 residues: Elongation factor Tu (395 aa).

In terms of domain architecture, tr-type G spans 10–204 (KPHVNIGTIG…AIDNWIPLPQ (195 aa)). Residues 19 to 26 (GHVDHGKT) are G1. 19-26 (GHVDHGKT) is a binding site for GTP. Thr-26 contacts Mg(2+). The interval 60-64 (GITIN) is G2. The tract at residues 81–84 (DCPG) is G3. GTP contacts are provided by residues 81 to 85 (DCPGH) and 136 to 139 (NKVD). Positions 136 to 139 (NKVD) are G4. A G5 region spans residues 174 to 176 (SAL).

Belongs to the TRAFAC class translation factor GTPase superfamily. Classic translation factor GTPase family. EF-Tu/EF-1A subfamily. As to quaternary structure, monomer.

It is found in the cytoplasm. The catalysed reaction is GTP + H2O = GDP + phosphate + H(+). In terms of biological role, GTP hydrolase that promotes the GTP-dependent binding of aminoacyl-tRNA to the A-site of ribosomes during protein biosynthesis. This is Elongation factor Tu from Azobacteroides pseudotrichonymphae genomovar. CFP2.